A 296-amino-acid chain; its full sequence is Transcription repressor OFP3 (296 aa).

2 disordered regions span residues 27 to 115 (MSRS…SANA) and 131 to 196 (PSDQ…AHSS). Polar residues predominate over residues 60–69 (LSSTAHHPQA). Over residues 78–88 (SFKRKIKRKTV) the composition is skewed to basic residues. Residues 92 to 115 (SSRLKLSTSSSLNHRSKSSSSANA) are compositionally biased toward low complexity. Residues 136 to 159 (FVHDPEPHSSIDIKDELSVRKLDD) are compositionally biased toward basic and acidic residues. One can recognise an OVATE domain in the interval 228-287 (IVLSSVDPEKDFRESMVEMIMENKMREQKDLEDLLACYLSLNSSEYHDVIIKAFENTWLH).

As to quaternary structure, interacts with BLH1, BLH3, KNAT5 and KNAT7.

Its subcellular location is the nucleus. In terms of biological role, transcriptional repressor that may regulate multiple aspects of plant growth and development through the regulation of BEL1-LIKE (BLH) and KNOX TALE (KNAT) homeodomain transcription factors. This is Transcription repressor OFP3 (OFP3) from Arabidopsis thaliana (Mouse-ear cress).